The primary structure comprises 598 residues: Probable translation initiation factor IF-2 (598 aa).

The 221-residue stretch at 3–223 (LRCPIVSVLG…ISGLAQRFME (221 aa)) folds into the tr-type G domain. Residues 12 to 19 (GHVDHGKT) form a G1 region. 12–19 (GHVDHGKT) serves as a coordination point for GTP. The interval 37-41 (GITQH) is G2. Residues 76-79 (DTPG) are G3. GTP is bound by residues 76–80 (DTPGH) and 130–133 (NKID). The G4 stretch occupies residues 130-133 (NKID). Positions 200 to 202 (SAM) are G5.

This sequence belongs to the TRAFAC class translation factor GTPase superfamily. Classic translation factor GTPase family. IF-2 subfamily.

Its function is as follows. Function in general translation initiation by promoting the binding of the formylmethionine-tRNA to ribosomes. Seems to function along with eIF-2. The polypeptide is Probable translation initiation factor IF-2 (Methanococcus aeolicus (strain ATCC BAA-1280 / DSM 17508 / OCM 812 / Nankai-3)).